Here is a 246-residue protein sequence, read N- to C-terminus: Carboxy-S-adenosyl-L-methionine synthase (246 aa).

Residues Tyr39, 64-66 (GCS), 89-90 (DN), 117-118 (DI), Asn132, and Arg199 each bind S-adenosyl-L-methionine.

It belongs to the class I-like SAM-binding methyltransferase superfamily. Cx-SAM synthase family. Homodimer.

It catalyses the reaction prephenate + S-adenosyl-L-methionine = carboxy-S-adenosyl-L-methionine + 3-phenylpyruvate + H2O. Catalyzes the conversion of S-adenosyl-L-methionine (SAM) to carboxy-S-adenosyl-L-methionine (Cx-SAM). This chain is Carboxy-S-adenosyl-L-methionine synthase, found in Erwinia tasmaniensis (strain DSM 17950 / CFBP 7177 / CIP 109463 / NCPPB 4357 / Et1/99).